The sequence spans 883 residues: Translation initiation factor IF-2 (883 aa).

A disordered region spans residues 1 to 259 (MVDTKTPGDK…GASKQRGRLT (259 aa)). 2 stretches are compositionally biased toward low complexity: residues 10–22 (KTLT…LTLK) and 77–89 (PRQQ…PQQS). Residues 113 to 184 (ARVREIEERK…GDAEPAKKPA (72 aa)) show a composition bias toward basic and acidic residues. Low complexity predominate over residues 185 to 218 (ETSTTTTTAAPARPATTTTRTPTPAGRPPAVAAE). The span at 235–244 (PARPAPPPKQ) shows a compositional bias: pro residues. Residues 379-548 (PRSPVVTVMG…MIALQAEILE (170 aa)) form the tr-type G domain. The tract at residues 388–395 (GHVDHGKT) is G1. A GTP-binding site is contributed by 388–395 (GHVDHGKT). Residues 413 to 417 (GITQH) are G2. A G3 region spans residues 436–439 (DTPG). GTP contacts are provided by residues 436 to 440 (DTPGH) and 490 to 493 (NKID). The G4 stretch occupies residues 490–493 (NKID). The G5 stretch occupies residues 526 to 528 (SAK).

The protein belongs to the TRAFAC class translation factor GTPase superfamily. Classic translation factor GTPase family. IF-2 subfamily.

Its subcellular location is the cytoplasm. Functionally, one of the essential components for the initiation of protein synthesis. Protects formylmethionyl-tRNA from spontaneous hydrolysis and promotes its binding to the 30S ribosomal subunits. Also involved in the hydrolysis of GTP during the formation of the 70S ribosomal complex. This is Translation initiation factor IF-2 from Rhodopseudomonas palustris (strain ATCC BAA-98 / CGA009).